We begin with the raw amino-acid sequence, 664 residues long: Macoilin (664 aa).

4 helical membrane passes run 28 to 48 (TFLY…DFVL), 75 to 95 (AFSV…LLFI), 120 to 140 (VCLP…AIRF), and 154 to 174 (FAAH…KSYV). Residues 253 to 265 (REKGKEKDKDAKK) are compositionally biased toward basic and acidic residues. The interval 253–274 (REKGKEKDKDAKKHNLGINNNN) is disordered. Position 305 is a phosphoserine (serine 305). A compositionally biased stretch (polar residues) spans 320–348 (KNYKNASGVVNSSPRSHSATNGSIPSSSS). Positions 320 to 367 (KNYKNASGVVNSSPRSHSATNGSIPSSSSKNEKKQKCTSKSPSAHKDL) are disordered. A glycan (N-linked (GlcNAc...) asparagine) is linked at asparagine 324. A Phosphoserine modification is found at serine 332. N-linked (GlcNAc...) asparagine glycosylation is found at asparagine 340 and asparagine 452. Positions 630-664 (TSPLSPVSPHYSSKFVETSPSGLDPNASVYQPLKK) are disordered. Serine 631 and serine 634 each carry phosphoserine. Asparagine 655 carries an N-linked (GlcNAc...) asparagine glycan.

This sequence belongs to the macoilin family.

Its subcellular location is the rough endoplasmic reticulum membrane. It localises to the nucleus membrane. Plays a role in the regulation of neuronal activity. This chain is Macoilin (MACO1), found in Sus scrofa (Pig).